The primary structure comprises 338 residues: Fructose-1,6-bisphosphatase 1 (338 aa).

Residue Ala2 is modified to N-acetylalanine. AMP is bound by residues 18 to 22 (VMEEG) and 28 to 32 (TGEMT). Asp69 and Glu98 together coordinate Mg(2+). 113-114 (KY) is an AMP binding site. Residues Asp119, Leu121, and Asp122 each contribute to the Mg(2+) site. Substrate is bound at residue 122–125 (DGSS). An AMP-binding site is contributed by Arg141. Lys151 is subject to N6-succinyllysine. Substrate-binding positions include 213 to 216 (NEGY), 244 to 249 (RYVGSM), Tyr265, and 275 to 277 (KLR). 3 positions are modified to phosphotyrosine: Tyr216, Tyr245, and Tyr265. Position 281 (Glu281) interacts with Mg(2+).

It belongs to the FBPase class 1 family. In terms of assembly, homotetramer. It depends on Mg(2+) as a cofactor.

It carries out the reaction beta-D-fructose 1,6-bisphosphate + H2O = beta-D-fructose 6-phosphate + phosphate. The protein operates within carbohydrate biosynthesis; gluconeogenesis. Its activity is regulated as follows. Subject to complex allosteric regulation. The enzyme can assume an active R-state, or an inactive T-state. Intermediate conformations may exist. AMP acts as an allosteric inhibitor. AMP binding affects the turnover of bound substrate and not the affinity for substrate. Fructose 2,6-bisphosphate acts as a competitive inhibitor. Fructose 2,6-bisphosphate and AMP have synergistic effects. In terms of biological role, catalyzes the hydrolysis of fructose 1,6-bisphosphate to fructose 6-phosphate in the presence of divalent cations, acting as a rate-limiting enzyme in gluconeogenesis. Plays a role in regulating glucose sensing and insulin secretion of pancreatic beta-cells. Appears to modulate glycerol gluconeogenesis in liver. Important regulator of appetite and adiposity; increased expression of the protein in liver after nutrient excess increases circulating satiety hormones and reduces appetite-stimulating neuropeptides and thus seems to provide a feedback mechanism to limit weight gain. This Oryctolagus cuniculus (Rabbit) protein is Fructose-1,6-bisphosphatase 1 (FBP1).